A 156-amino-acid chain; its full sequence is Ribosomal RNA large subunit methyltransferase H (156 aa).

S-adenosyl-L-methionine contacts are provided by residues Leu-73, Gly-104, and 123 to 128 (LSPLTL).

It belongs to the RNA methyltransferase RlmH family. In terms of assembly, homodimer.

The protein resides in the cytoplasm. It catalyses the reaction pseudouridine(1915) in 23S rRNA + S-adenosyl-L-methionine = N(3)-methylpseudouridine(1915) in 23S rRNA + S-adenosyl-L-homocysteine + H(+). Specifically methylates the pseudouridine at position 1915 (m3Psi1915) in 23S rRNA. This is Ribosomal RNA large subunit methyltransferase H from Edwardsiella ictaluri (strain 93-146).